A 138-amino-acid chain; its full sequence is Putative pre-16S rRNA nuclease (138 aa).

Belongs to the YqgF nuclease family.

The protein resides in the cytoplasm. Its function is as follows. Could be a nuclease involved in processing of the 5'-end of pre-16S rRNA. This chain is Putative pre-16S rRNA nuclease, found in Bacteroides fragilis (strain ATCC 25285 / DSM 2151 / CCUG 4856 / JCM 11019 / LMG 10263 / NCTC 9343 / Onslow / VPI 2553 / EN-2).